A 744-amino-acid polypeptide reads, in one-letter code: Dolasta-1(15),8-diene synthase (744 aa).

The segment at 1 to 344 is terpene cyclase; the sequence is MASTMMNYQD…RRYNPAAPLP (344 aa). Residues Asp108 and Asp112 each contribute to the Mg(2+) site. Substrate-binding positions include Asp108, Asp112, 198–201, 246–250, and 336–337; these read RHYD, SWDKE, and RY. The DDXXD signature appears at 108 to 112; it reads DDLTD. Residues 345-744 are prenyltransferase; the sequence is RREDIGKVNG…LHLITFQLKV (400 aa). The tract at residues 399-422 is disordered; it reads YTTMTPAETSSDDKKKKAKASHET. Residues 409–422 are compositionally biased toward basic and acidic residues; sequence SDDKKKKAKASHET. Positions 459 and 488 each coordinate isopentenyl diphosphate. Mg(2+)-binding residues include Asp495 and Asp499. The short motif at 495–499 is the DDXXD element; that stretch reads DDVQD. Arg504 is a binding site for dimethylallyl diphosphate. An isopentenyl diphosphate-binding site is contributed by Arg505. The dimethylallyl diphosphate site is built by Lys581, Thr582, and Gln617.

This sequence in the N-terminal section; belongs to the terpene synthase family. It in the C-terminal section; belongs to the FPP/GGPP synthase family. Hexamer. Mg(2+) is required as a cofactor.

It catalyses the reaction isopentenyl diphosphate + (2E,6E)-farnesyl diphosphate = (2E,6E,10E)-geranylgeranyl diphosphate + diphosphate. The enzyme catalyses (2E,6E,10E)-geranylgeranyl diphosphate = (5R,12R,14S)-dolasta-1(15),8-diene + diphosphate. The catalysed reaction is (2E,6E,10E)-geranylgeranyl diphosphate = delta-araneosene + diphosphate. Its function is as follows. Bifunctional terpene synthase involved in the biosynthesis of the diterpenes delta-araneosene and dolasta-1(15),8-diene. The C-terminal prenyltransferase domain of CgDS catalyzes formation of the universal precursor of diterpene, geranylgeranyl diphosphate (GGPP), whereas the N-terminal terpene cyclase domain catalyzes the cyclization of GGPP to the intermediate delta-araneosene that is further converted to dolasta-1(15),8-diene in a second cyclization event. In some cases the cyclization stops at the delta-araneosene stage. The sequence is that of Dolasta-1(15),8-diene synthase from Colletotrichum gloeosporioides (Anthracnose fungus).